Reading from the N-terminus, the 449-residue chain is Argininosuccinate synthase (449 aa).

Residues 17–25 (AFSGGLDTS) and alanine 43 contribute to the ATP site. Residue tyrosine 99 participates in L-citrulline binding. 2 residues coordinate ATP: glycine 129 and threonine 131. L-aspartate is bound by residues threonine 131, asparagine 135, and aspartate 136. Asparagine 135 is a binding site for L-citrulline. An ATP-binding site is contributed by aspartate 136. Residues arginine 139 and serine 192 each coordinate L-citrulline. Aspartate 194 serves as a coordination point for ATP. L-citrulline contacts are provided by threonine 201, glutamate 203, and glutamate 280.

The protein belongs to the argininosuccinate synthase family. Type 2 subfamily. Homotetramer.

The protein resides in the cytoplasm. It carries out the reaction L-citrulline + L-aspartate + ATP = 2-(N(omega)-L-arginino)succinate + AMP + diphosphate + H(+). It functions in the pathway amino-acid biosynthesis; L-arginine biosynthesis; L-arginine from L-ornithine and carbamoyl phosphate: step 2/3. This Dickeya dadantii (strain 3937) (Erwinia chrysanthemi (strain 3937)) protein is Argininosuccinate synthase.